We begin with the raw amino-acid sequence, 218 residues long: Adenylate kinase (218 aa).

An ATP-binding site is contributed by 10–15 (GAGKGT). Residues 30–59 (STGDMLRAAVKAGTPLGLQAKAVMDAGQLV) form an NMP region. Residues threonine 31, arginine 36, 57–59 (QLV), 85–88 (GFPR), and glutamine 92 contribute to the AMP site. Residues 122–159 (GRRSHPASGRTYHVKFNPPKVEGKDDVTGEPLVQREDD) are LID. Residues arginine 123 and 132–133 (TY) contribute to the ATP site. Residues 127–150 (PASGRTYHVKFNPPKVEGKDDVTG) are disordered. The AMP site is built by arginine 156 and arginine 167. Residue glycine 203 participates in ATP binding.

It belongs to the adenylate kinase family. In terms of assembly, monomer.

It is found in the cytoplasm. It carries out the reaction AMP + ATP = 2 ADP. Its pathway is purine metabolism; AMP biosynthesis via salvage pathway; AMP from ADP: step 1/1. Functionally, catalyzes the reversible transfer of the terminal phosphate group between ATP and AMP. Plays an important role in cellular energy homeostasis and in adenine nucleotide metabolism. This Acidovorax ebreus (strain TPSY) (Diaphorobacter sp. (strain TPSY)) protein is Adenylate kinase.